The chain runs to 290 residues: ATP synthase gamma chain (290 aa).

This sequence belongs to the ATPase gamma chain family. As to quaternary structure, F-type ATPases have 2 components, CF(1) - the catalytic core - and CF(0) - the membrane proton channel. CF(1) has five subunits: alpha(3), beta(3), gamma(1), delta(1), epsilon(1). CF(0) has three main subunits: a, b and c.

The protein localises to the cell membrane. In terms of biological role, produces ATP from ADP in the presence of a proton gradient across the membrane. The gamma chain is believed to be important in regulating ATPase activity and the flow of protons through the CF(0) complex. The polypeptide is ATP synthase gamma chain (Wolbachia sp. subsp. Brugia malayi (strain TRS)).